Reading from the N-terminus, the 177-residue chain is Shikimate kinase (177 aa).

17-22 provides a ligand contact to ATP; the sequence is GAGKST. S21 contacts Mg(2+). 3 residues coordinate substrate: D39, R63, and G85. R123 is a binding site for ATP. Residue R142 participates in substrate binding. R160 contacts ATP.

Belongs to the shikimate kinase family. In terms of assembly, monomer. The cofactor is Mg(2+).

Its subcellular location is the cytoplasm. The enzyme catalyses shikimate + ATP = 3-phosphoshikimate + ADP + H(+). It functions in the pathway metabolic intermediate biosynthesis; chorismate biosynthesis; chorismate from D-erythrose 4-phosphate and phosphoenolpyruvate: step 5/7. Its function is as follows. Catalyzes the specific phosphorylation of the 3-hydroxyl group of shikimic acid using ATP as a cosubstrate. The polypeptide is Shikimate kinase (Halorhodospira halophila (strain DSM 244 / SL1) (Ectothiorhodospira halophila (strain DSM 244 / SL1))).